A 177-amino-acid chain; its full sequence is Peptide methionine sulfoxide reductase MsrA (177 aa).

Residue Cys14 is part of the active site.

Belongs to the MsrA Met sulfoxide reductase family.

The enzyme catalyses L-methionyl-[protein] + [thioredoxin]-disulfide + H2O = L-methionyl-(S)-S-oxide-[protein] + [thioredoxin]-dithiol. The catalysed reaction is [thioredoxin]-disulfide + L-methionine + H2O = L-methionine (S)-S-oxide + [thioredoxin]-dithiol. In terms of biological role, has an important function as a repair enzyme for proteins that have been inactivated by oxidation. Catalyzes the reversible oxidation-reduction of methionine sulfoxide in proteins to methionine. This chain is Peptide methionine sulfoxide reductase MsrA, found in Bacillus velezensis (strain DSM 23117 / BGSC 10A6 / LMG 26770 / FZB42) (Bacillus amyloliquefaciens subsp. plantarum).